Consider the following 203-residue polypeptide: Cupin-domain-containing oxidoreductase fogC (203 aa).

Positions 105-171 (DFAPGVESPL…GNGTLPGRML (67 aa)) are cupin-like domain.

Belongs to the virC family.

It functions in the pathway secondary metabolite biosynthesis. Cupin-domain-containing oxidoreductase; part of the gene cluster that mediates the biosynthesis of flavoglaucin and congeners (including aspergin, dihydroauroglaucin and auroglaucin), prenylated salicylaldehyde derivatives carrying a saturated or an unsaturated C-7 side chain. The PKS fogA releases the carboxylic acid (8E,10E,12E)-3,5,7-trihydroxytetradeca-8,10,12-trienoic acid as its product, as well as derivatives with one and two double bonds. FogA is indeed able to reduce the initial triketide, thus being at least partially responsible for the differently saturated heptyl side chains of flavoglaucin congeners. The oxidoreductases fogB, fogC and fogD modify the nascent polyketide in fogA-bound form and, together, fogA, fogB, fogC and fogD are necessary for the formation of the aromatic core and the cyclized PKS products are released as salicyl alcohols. In particular, fogB is responsible for oxidation of a hydroxyl group or reduction of remaining double bond(s) at the C-7 residue whereas fogD is probably involved in the reductive release of the modified PKS products. The cytochrome P450 monooxygenase fogE is then responsible for the hydroxylation at C-3 of the benzene ring. The fogE products are substrates of the prenyltransferase fogH and the prenylated benzyl alcohols are subsequently oxidized by the fogF to produce the final aryl aldehydes flavoglaucin and congeners. The short-chain dehydrogenase fogG does not seem to be involved in the biosynthesis of the prenylated salicylaldehyde derivatives. The protein is Cupin-domain-containing oxidoreductase fogC of Aspergillus ruber (strain CBS 135680).